A 117-amino-acid chain; its full sequence is Large ribosomal subunit protein uL18 (117 aa).

Belongs to the universal ribosomal protein uL18 family. Part of the 50S ribosomal subunit; part of the 5S rRNA/L5/L18/L25 subcomplex. Contacts the 5S and 23S rRNAs.

Its function is as follows. This is one of the proteins that bind and probably mediate the attachment of the 5S RNA into the large ribosomal subunit, where it forms part of the central protuberance. The sequence is that of Large ribosomal subunit protein uL18 from Idiomarina loihiensis (strain ATCC BAA-735 / DSM 15497 / L2-TR).